The chain runs to 161 residues: Peptidyl-prolyl cis-trans isomerase-like 3 (161 aa).

At Ser-2 the chain carries N-acetylserine. The PPIase cyclophilin-type domain maps to 2–154 (SVTLHTDVGD…NDVHIKDITI (153 aa)). Arg-61 carries the post-translational modification Omega-N-methylarginine.

The protein belongs to the cyclophilin-type PPIase family. PPIL3 subfamily. In terms of assembly, identified in the spliceosome C complex. Ubiquitous. Detected at low levels.

It catalyses the reaction [protein]-peptidylproline (omega=180) = [protein]-peptidylproline (omega=0). Its function is as follows. PPIases accelerate the folding of proteins. It catalyzes the cis-trans isomerization of proline imidic peptide bonds in oligopeptides. May be involved in pre-mRNA splicing. The protein is Peptidyl-prolyl cis-trans isomerase-like 3 (PPIL3) of Homo sapiens (Human).